The primary structure comprises 598 residues: Probable pectinesterase/pectinesterase inhibitor 34 (598 aa).

The disordered stretch occupies residues 1–40; the sequence is MGYERLGPSGATGSVTTSTTTAPILNQVSTSEQPENNNRR. Over residues 7–23 the composition is skewed to low complexity; sequence GPSGATGSVTTSTTTAP. The span at 24–36 shows a compositional bias: polar residues; it reads ILNQVSTSEQPEN. The chain crosses the membrane as a helical span at residues 46–66; the sequence is VVSSIVLAISLILAAAIFAGV. A pectinesterase inhibitor 34 region spans residues 81–232; it reads RKPSQAISKA…SELVSNCLAI (152 aa). Residues 284-582 form a pectinesterase 34 region; it reads DIIVSKDGNG…FTVAEFIYGS (299 aa). 2 residues coordinate substrate: Thr-360 and Gln-390. The Proton donor; for pectinesterase activity role is filled by Asp-413. A disulfide bond links Cys-427 and Cys-447. Asp-434 acts as the Nucleophile; for pectinesterase activity in catalysis. Substrate-binding residues include Arg-502 and Trp-504.

This sequence in the N-terminal section; belongs to the PMEI family. The protein in the C-terminal section; belongs to the pectinesterase family. In terms of tissue distribution, expressed in siliques.

The protein localises to the membrane. The catalysed reaction is [(1-&gt;4)-alpha-D-galacturonosyl methyl ester](n) + n H2O = [(1-&gt;4)-alpha-D-galacturonosyl](n) + n methanol + n H(+). It functions in the pathway glycan metabolism; pectin degradation; 2-dehydro-3-deoxy-D-gluconate from pectin: step 1/5. Its function is as follows. Acts in the modification of cell walls via demethylesterification of cell wall pectin. This Arabidopsis thaliana (Mouse-ear cress) protein is Probable pectinesterase/pectinesterase inhibitor 34 (PME34).